Here is a 364-residue protein sequence, read N- to C-terminus: MMPFMDLILSILVSSVLLLNCKSSFHESPRRDAGSEVTSFFYVGGKYENFTIYVEEYVPQNPTQPYPIIFIAGAGQTGTNWLTTPDGRPGWASFFLDHGYTVYLTDQTSRGRSPWYPGIGFMVASGTSDIETLFTSTSHNLWPQAHLHTQWPGTGKVGDPTFDAFYAAQVQLQADQPISEESNTKAHSALLDRIGPAYVLTHSQAGSYGWRIGDARPNLVKGIVALEPAGPPFDQKYPYTGRARPWGITIGEIEYEPSAGPNATDLDTVIIPAKDQDHTECVLQSEPPKLLKNLQAIPALVVGAEASFHAPYEYCTAEYLKQAGVDVEFADLGEQGIKGNGHMMFMEKNNLEIAEVVLTWIQKQ.

Positions 1 to 18 (MMPFMDLILSILVSSVLL) are cleaved as a signal peptide. N49 is a glycosylation site (N-linked (GlcNAc...) asparagine). Residue S203 is the Nucleophile of the active site. A glycan (N-linked (GlcNAc...) asparagine) is linked at N262.

The protein belongs to the AB hydrolase superfamily.

It is found in the secreted. It carries out the reaction a carboxylic ester + H2O = an alcohol + a carboxylate + H(+). Functionally, part of the gene cluster that mediates the biosynthesis of the antihypercholesterolemic agents phomoidrides which are dimeric anhydrides. The function of phiG within the pathway has still to be determined. The pathway begins with the highly reducing polyketide synthase phiA that catalyzes the formation of a C12-fatty acyl-ACP, starting from one acetate and 5 malonate units. The hydrolase phiM is involved in the release of the C12-fatty acyl chain from phiA. The alkylcitrate synthase (ACS) phiJ and the alkylcitrate dehydratase (ACDH) phiI then give rise to decarboxylated monomeric anhydrides by coupling the C12-fatty acyl chain with oxalacetic acid. The cyclase phiC is responsible for the dimerization of the monomeric anhydrides which leads to the production of prephomoidride that contains the characteristic bicyclo[4.3.1]deca-1,6-diene system of phomoidrides. Iterative oxidation catalyzed by the alpha-ketoglutarate-dependent dioxygenase phiK produced then phomoidride A. Finally, the methyltransferase phiE converts phomoidride A to phomoidride B via an acetalization reaction. The phosphatidylethanolamine-binding protein phiB and phiN are not essential for dimerization and their functions have still to be determined. This is Probable secreted lipase phiG from Fungal sp. (strain ATCC 74256).